The chain runs to 501 residues: Myosin heavy chain, embryonic smooth muscle isoform (501 aa).

The stretch at 1–457 (REAREKETKA…TLKNRLRRGG (457 aa)) forms a coiled coil. The interval 1-501 (REAREKETKA…VNETQPPQSE (501 aa)) is rodlike tail (S2 and LMM domains). Disordered stretches follow at residues 182 to 202 (YQRE…QSKE), 221 to 254 (LASS…ALLD), and 397 to 501 (MEKA…PQSE). Residues 223 to 233 (SSERARRHAEQ) are compositionally biased toward basic and acidic residues. The segment covering 492–501 (VNETQPPQSE) has biased composition (polar residues).

In terms of assembly, muscle myosin is a hexameric protein that consists of 2 heavy chain subunits (MHC), 2 alkali light chain subunits (MLC) and 2 regulatory light chain subunits (MLC-2).

It is found in the cytoplasm. It localises to the myofibril. Its function is as follows. Muscle contraction. This is Myosin heavy chain, embryonic smooth muscle isoform from Oryctolagus cuniculus (Rabbit).